The chain runs to 512 residues: Protein SHC1 (512 aa).

Acidic residues predominate over residues 101–113 (EQDEFENDVEDDA). Disordered regions lie at residues 101–122 (EQDE…EKSQ) and 144–165 (DGNS…SVAL). Sel1-like repeat units lie at residues 318–353 (PDAQ…KRLH), 354–389 (IESV…TKNH), 390–429 (PAAM…SMAS), and 433–470 (CGAP…ALGH).

It belongs to the SKT5 family.

The protein localises to the cytoplasm. It localises to the cytoplasmic granule membrane. Functionally, required for the activation of chitin synthase III (CHS3) activity during the sporulation process. The chain is Protein SHC1 (SHC1) from Saccharomyces cerevisiae (strain YJM789) (Baker's yeast).